The primary structure comprises 858 residues: Rho GTPase-activating protein 17 (858 aa).

The region spanning 14–246 is the BAR domain; it reads QTVGRAEKTE…MRAHQDKWAE (233 aa). One can recognise a Rho-GAP domain in the interval 252–442; sequence TPLEEHLKRS…PIIQHADWFF (191 aa). The segment covering 459–475 has biased composition (polar residues); it reads TPNSNHSSHTGNDSDSG. The segment at 459–482 is disordered; it reads TPNSNHSSHTGNDSDSGTLERKRP. Serine 484 bears the Phosphoserine mark. A disordered region spans residues 516–823; sequence RKHISPAFQP…VTDTNSRVSE (308 aa). The segment covering 543–552 has biased composition (polar residues); sequence PSQSSRADSN. Positions 553–563 are enriched in low complexity; sequence SVGGPVPSSSG. Phosphoserine is present on serine 575. Polar residues predominate over residues 592–617; the sequence is RNSNQITTVPNQAQTGGNSHQLSVGT. Over residues 637–650 the composition is skewed to pro residues; it reads APAPPKPGNPPPGH. Positions 653-702 are enriched in low complexity; that stretch reads GQSSPGTGTSPKPSTRSPSPPQQQQQQQQQQQQQQQQQQQQQQQQQQQQQ. Phosphoserine occurs at positions 710 and 712. 2 stretches are compositionally biased toward pro residues: residues 716–729 and 738–756; these read IQAP…PPTQ and EPGP…PPPA. Residues threonine 742, threonine 746, and threonine 748 each carry the phosphothreonine modification. The SH3-binding motif lies at 742-755; the sequence is TPPQTPTPPSTPPP. Serine 751 carries the post-translational modification Phosphoserine. Threonine 752 carries the post-translational modification Phosphothreonine. The segment covering 757–769 has biased composition (polar residues); it reads KQNSSQSETTQLH. Residues 784 to 794 show a composition bias toward pro residues; it reads RPSVPPPPNPP. Residues 806–823 are compositionally biased toward polar residues; that stretch reads SVPTASRIVTDTNSRVSE.

As to quaternary structure, component of a complex whose core is composed of ARHGAP17, AMOT, PALS1, PATJ and PARD3/PAR3. Interacts with NHERF1, FNBP1, TRIP10, CAPZA (CAPZA1, CAPZA2 or CAPZA3), CAPZB, CD2AP and SH3KBP1/CIN85. In terms of tissue distribution, highly expressed in brain; neuron-specific (at protein level). Isoform 2, isoform 3 and isoform 4 are predominantly expressed in neuronal tissues and correlate well with the differentiation of neurons, while isoform 1 is strongly expressed in embryonic brain.

The protein localises to the membrane. Its subcellular location is the cytoplasm. It localises to the cell junction. The protein resides in the tight junction. Functionally, rho GTPase-activating protein involved in the maintenance of tight junction by regulating the activity of CDC42, thereby playing a central role in apical polarity of epithelial cells. Specifically acts as a GTPase activator for the CDC42 GTPase by converting it to an inactive GDP-bound state. The complex formed with AMOT acts by regulating the uptake of polarity proteins at tight junctions, possibly by deciding whether tight junction transmembrane proteins are recycled back to the plasma membrane or sent elsewhere. Participates in the Ca(2+)-dependent regulation of exocytosis, possibly by catalyzing GTPase activity of Rho family proteins and by inducing the reorganization of the cortical actin filaments. Acts as a GTPase activator in vitro for RAC1. This chain is Rho GTPase-activating protein 17 (Arhgap17), found in Rattus norvegicus (Rat).